Consider the following 401-residue polypeptide: Homeobox protein engrailed-1 (401 aa).

4 disordered regions span residues 1-102 (MEEQ…PAAQ), 138-167 (GGGAAAGGGSRVERDRGQTGAGRDPVHSLG), 229-253 (SKPSDSGGGSGGNAGSPGAQGAKFP), and 293-315 (RPSSGPRTRKLKKKKNEKEDKRP). Residues 13–48 (DSGLGAVAAAAPSGLSLSLSPGASGSSGSDGDSVPV) are compositionally biased toward low complexity. 2 stretches are compositionally biased toward pro residues: residues 49–64 (SPQPAPPSPPAAPCLP) and 73–88 (PPHPPPPPPPPPPPPQ). Over residues 89–102 (HLAAPAHQPQPAAQ) the composition is skewed to low complexity. Composition is skewed to gly residues over residues 138–147 (GGGAAAGGGS) and 234–243 (SGGGSGGNAG). The segment at residues 312 to 371 (DKRPRTAFTAEQLQRLKAEFQANRYITEQRRQTLAQELSLNESQIKIWFQNKRAKIKKAT) is a DNA-binding region (homeobox).

It belongs to the engrailed homeobox family.

The protein localises to the nucleus. In terms of biological role, required for proper formation of the apical ectodermal ridge and correct dorsal-ventral patterning in the limb. In Mus musculus (Mouse), this protein is Homeobox protein engrailed-1 (En1).